The chain runs to 422 residues: F-box protein At3g12350 (422 aa).

The region spanning Ala-5–Met-52 is the F-box domain. Basic and acidic residues-rich tracts occupy residues Asn-197 to Gly-207 and Lys-242 to Lys-252. 2 disordered regions span residues Asn-197–Ser-216 and Leu-226–Lys-252.

In Arabidopsis thaliana (Mouse-ear cress), this protein is F-box protein At3g12350.